Reading from the N-terminus, the 714-residue chain is Putative glutamine--fructose-6-phosphate aminotransferase [isomerizing] (714 aa).

The Nucleophile; for GATase activity role is filled by Cys-2. Positions 2 to 321 constitute a Glutamine amidotransferase type-2 domain; the sequence is CGIFGYCNFL…DNDIAHIYDG (320 aa). The segment covering 266–280 has biased composition (polar residues); the sequence is STTSTFNHGSSTETP. The tract at residues 266–285 is disordered; sequence STTSTFNHGSSTETPAENGL. SIS domains are found at residues 387 to 526 and 559 to 704; these read WLTE…DLVS and CDKK…VDLP.

The catalysed reaction is D-fructose 6-phosphate + L-glutamine = D-glucosamine 6-phosphate + L-glutamate. Its pathway is nucleotide-sugar biosynthesis; UDP-N-acetyl-alpha-D-glucosamine biosynthesis; alpha-D-glucosamine 6-phosphate from D-fructose 6-phosphate: step 1/1. In terms of biological role, involved in amino sugar synthesis (formation of chitin, supplies the amino sugars of asparagine-linked oligosaccharides of glycoproteins). The sequence is that of Putative glutamine--fructose-6-phosphate aminotransferase [isomerizing] from Saccharomyces cerevisiae (strain YJM789) (Baker's yeast).